We begin with the raw amino-acid sequence, 556 residues long: Glucose-6-phosphate isomerase (556 aa).

The active-site Proton donor is the Glu-360. Residues His-391 and Lys-519 contribute to the active site.

This sequence belongs to the GPI family.

The protein localises to the cytoplasm. The enzyme catalyses alpha-D-glucose 6-phosphate = beta-D-fructose 6-phosphate. It functions in the pathway carbohydrate biosynthesis; gluconeogenesis. It participates in carbohydrate degradation; glycolysis; D-glyceraldehyde 3-phosphate and glycerone phosphate from D-glucose: step 2/4. Its function is as follows. Catalyzes the reversible isomerization of glucose-6-phosphate to fructose-6-phosphate. The chain is Glucose-6-phosphate isomerase from Acinetobacter baumannii (strain SDF).